A 170-amino-acid polypeptide reads, in one-letter code: Photosystem I assembly protein Ycf3 (170 aa).

TPR repeat units lie at residues 35–68 (AFTY…EIDP), 72–105 (SYIL…NPFL), and 120–153 (GEQA…TPGN).

This sequence belongs to the Ycf3 family.

The protein resides in the plastid. It is found in the chloroplast thylakoid membrane. In terms of biological role, essential for the assembly of the photosystem I (PSI) complex. May act as a chaperone-like factor to guide the assembly of the PSI subunits. The polypeptide is Photosystem I assembly protein Ycf3 (Saccharum officinarum (Sugarcane)).